We begin with the raw amino-acid sequence, 121 residues long: Non-specific lipid-transfer protein 3 (121 aa).

The first 28 residues, 1–28 (MAGARRTMALVALVAVVAAAVVAERASA), serve as a signal peptide directing secretion. Disulfide bonds link Cys-32–Cys-80, Cys-42–Cys-57, Cys-58–Cys-103, and Cys-78–Cys-117.

Belongs to the plant LTP family.

Functionally, plant non-specific lipid-transfer proteins transfer phospholipids as well as galactolipids across membranes. May play a role in wax or cutin deposition in the cell walls of expanding epidermal cells and certain secretory tissues. May possess an antifungal activity and protect the plant against pathogens. This chain is Non-specific lipid-transfer protein 3 (LTP110-A), found in Oryza sativa subsp. indica (Rice).